The chain runs to 629 residues: tRNA uridine 5-carboxymethylaminomethyl modification enzyme MnmG (629 aa).

14-19 (GAGHAG) provides a ligand contact to FAD. 274 to 288 (GPRYCPSIEDKVVRF) is a binding site for NAD(+).

The protein belongs to the MnmG family. Homodimer. Heterotetramer of two MnmE and two MnmG subunits. The cofactor is FAD.

The protein localises to the cytoplasm. Its function is as follows. NAD-binding protein involved in the addition of a carboxymethylaminomethyl (cmnm) group at the wobble position (U34) of certain tRNAs, forming tRNA-cmnm(5)s(2)U34. The sequence is that of tRNA uridine 5-carboxymethylaminomethyl modification enzyme MnmG from Xylella fastidiosa (strain 9a5c).